The sequence spans 229 residues: MYDISGWKHVFKLDPNKELSDEHLEMICESGTDAVIVGGSDGVTIDNVLHMLVSIRRYAVPCVLEVSNVEAITPGFDFYYIPSVLNSRKVEWVTGVHHEALKEFGDIMDWDEIFMEGYCVLNPEAKVAQLTDAKCDVTEDDVIAYARLADKLLRLPIFYLEYSGTYGDVELVKNVKAQLKQAKLYYGGGISNAEQAKEMAQHADTVVVGNIIYDDIKAALKTVKAVKGE.

Position 12 (K12) interacts with sn-glycerol 1-phosphate. Residues D14 and S40 each contribute to the Mg(2+) site. Sn-glycerol 1-phosphate contacts are provided by residues 159 to 164 (YLEYSG), G189, and 209 to 210 (GN).

The protein belongs to the GGGP/HepGP synthase family. Group I subfamily. In terms of assembly, homodimer. Mg(2+) serves as cofactor.

The enzyme catalyses sn-glycerol 1-phosphate + all-trans-heptaprenyl diphosphate = 3-heptaprenyl-sn-glycero-1-phosphate + diphosphate. It participates in membrane lipid metabolism; glycerophospholipid metabolism. Functionally, prenyltransferase that catalyzes in vivo the transfer of the heptaprenyl moiety of heptaprenyl pyrophosphate (HepPP; 35 carbon atoms) to the C3 hydroxyl of sn-glycerol-1-phosphate (G1P), producing heptaprenylglyceryl phosphate (HepGP). This reaction is an ether-bond-formation step in the biosynthesis of archaea-type G1P-based membrane lipids found in Bacillales. In Bacillus cereus (strain AH187), this protein is Heptaprenylglyceryl phosphate synthase.